We begin with the raw amino-acid sequence, 516 residues long: Probable fucosyltransferase 8 (516 aa).

A helical; Signal-anchor for type II membrane protein transmembrane segment spans residues 5–25 (ITVVTCLFLLSVMQLSFFNIF). Residues 26-516 (NYQLLDATTN…ITGLKLVDSN (491 aa)) are Lumenal-facing. N-linked (GlcNAc...) asparagine glycosylation is found at Asn-35, Asn-116, Asn-211, Asn-362, and Asn-463.

Belongs to the glycosyltransferase 37 family. In terms of tissue distribution, expressed in leaves and stems.

The protein resides in the golgi apparatus. The protein localises to the golgi stack membrane. Its pathway is protein modification; protein glycosylation. In terms of biological role, may be involved in cell wall biosynthesis. May act as a fucosyltransferase. In Arabidopsis thaliana (Mouse-ear cress), this protein is Probable fucosyltransferase 8 (FUT8).